A 621-amino-acid polypeptide reads, in one-letter code: NADPH-dependent diflavin oxidoreductase 1 (621 aa).

The 163-residue stretch at 6–168 (IAVLYGSETG…VYFEFEKRII (163 aa)) folds into the Flavodoxin-like domain. FMN is bound by residues 12–17 (SETGNA), 59–62 (STTG), 106–115 (LGDSSYPKFN), and Glu-142. The 266-residue stretch at 224–489 (KLIKTGTITL…VGPGVGLAPL (266 aa)) folds into the FAD-binding FR-type domain. Residues Arg-381, 411–414 (RLYS), and 443–446 (GVCT) contribute to the FAD site. NADP(+) is bound by residues 536–537 (SR) and 545–549 (TKYVQ). Trp-621 is an FAD binding site.

This sequence belongs to the NADPH-dependent diflavin oxidoreductase NDOR1 family. The protein in the N-terminal section; belongs to the flavodoxin family. It in the C-terminal section; belongs to the flavoprotein pyridine nucleotide cytochrome reductase family. In terms of assembly, interacts with DRE2; as part of the cytosolic iron-sulfur (Fe-S) protein assembly (CIA) machinery. It depends on FAD as a cofactor. The cofactor is FMN.

The protein localises to the cytoplasm. The protein resides in the mitochondrion. It carries out the reaction 2 oxidized [2Fe-2S]-[protein] + NADPH = 2 reduced [2Fe-2S]-[protein] + NADP(+) + H(+). In terms of biological role, NADPH-dependent reductase which is a central component of the cytosolic iron-sulfur (Fe-S) protein assembly (CIA) machinery. Transfers electrons from NADPH via its FAD and FMN prosthetic groups to the [2Fe-2S] cluster of DRE2, another key component of the CIA machinery. In turn, this reduced cluster provides electrons for assembly of cytosolic iron-sulfur cluster proteins. Positively controls H(2)O(2)-induced cell death. The chain is NADPH-dependent diflavin oxidoreductase 1 from Candida glabrata (strain ATCC 2001 / BCRC 20586 / JCM 3761 / NBRC 0622 / NRRL Y-65 / CBS 138) (Yeast).